The sequence spans 202 residues: Capsid protein (202 aa).

The protein belongs to the tymoviruses capsid protein family.

The protein resides in the virion. In terms of biological role, self-assembles to form a T=3 icosahedral capsid composed of 180 copies of the capsid protein. The capsid encapsulates the single-stranded RNA genome. The protein is Capsid protein of Erysimum (ELV).